The primary structure comprises 578 residues: Cytochrome P450 monooxygenase fsoE (578 aa).

The helical transmembrane segment at 28 to 48 (LLMAVAITYAISWINWFFTSW) threads the bilayer. Residue Cys517 participates in heme binding.

This sequence belongs to the cytochrome P450 family. Requires heme as cofactor.

The protein resides in the membrane. The enzyme catalyses 3-O-(beta-D-glucopyranosyl)-isomotiol + 2 reduced [NADPH--hemoprotein reductase] + 2 O2 = 2-deacetoxyfuscoatroside + 2 oxidized [NADPH--hemoprotein reductase] + 2 H2O + 3 H(+). The catalysed reaction is 3-O-(beta-D-glucopyranosyl)-2alpha-hydroxyisomotiol + 2 reduced [NADPH--hemoprotein reductase] + 2 O2 = 2-deacetylfuscoatroside + 2 oxidized [NADPH--hemoprotein reductase] + 2 H2O + 3 H(+). It carries out the reaction 3-O-(beta-D-glucopyranosyl)-2alpha-acetoxyisomotiol + 2 reduced [NADPH--hemoprotein reductase] + 2 O2 = fuscoatroside + 2 oxidized [NADPH--hemoprotein reductase] + 2 H2O + 3 H(+). It catalyses the reaction isomotiol + reduced [NADPH--hemoprotein reductase] + O2 = 19beta-hydroxyisomotiol + oxidized [NADPH--hemoprotein reductase] + H2O + H(+). The enzyme catalyses 2alpha-hydroxyisomotiol + reduced [NADPH--hemoprotein reductase] + O2 = 2alpha,19beta-dihydroxyisomotiol + oxidized [NADPH--hemoprotein reductase] + H2O + H(+). The catalysed reaction is 2alpha,19beta-dihydroxyisomotiol + reduced [NADPH--hemoprotein reductase] + O2 = 2alpha-hydroxyismotiol-19-one + oxidized [NADPH--hemoprotein reductase] + 2 H2O + H(+). It carries out the reaction 2alpha-hydroxyismotiol-19-one + 2 reduced [NADPH--hemoprotein reductase] + O2 = 2-deacetyl,3-deglucopyranosyl-fuscoatroside + 2 oxidized [NADPH--hemoprotein reductase] + H2O + 3 H(+). Its pathway is secondary metabolite biosynthesis; terpenoid biosynthesis. Functionally, cytochrome P450 monooxygenase; part of the gene cluster that mediates the biosynthesis of the enfumafungin-type antibiotic, fuscoatroside. Within the pathway, fsoE catalyzes the oxidative cleavage of the c19-C20 bond within the E-ring, resulting in the formation of a carboxyl group and a methyl group. FsoE exhibits preferential substrate selectivity toward glycoside substrates over their aglycones. The fuscoatroside biosynthesis is initiated by the cyclization of 2,3(S)-oxidosqualene through FsoA's terpene cyclase (TC) domain, leading to the formation of the fernane skeleton isomotiol, harboring a fernane triterpene skeleton with a C8-C9 double bond. Subsequently, C2-alpha-hydroxylation mediated by fsoD results in the production of 2-alpha-hydroxy-isomotiol, which is further acetylated by fsoF. The glycosyltransferase (GT) domain of FsoA may convert isomotiol, 2-alpha-hydroxy-isomotiol, and the acetylated derivative of 2-alpha-hydroxy-isomotiol into their corresponding glycosides 3-O-(beta-D-glucopyranosyl)-isomotiol, 3-O-(beta-D-glucopyranosyl)-2-alpha-hydroxy-isomotiol, and 3-O-(beta-D-glucopyranosyl)-2-alpha-acetoxy-isomotiol, which then undergo oxidative cleavage under the action of fsoE to form s 2-deacetoxy-fuscoatroside, 2-deacetyl-fuscoatroside, and fuscoatroside, respectively. Although hydroxylation followed by acetylation of 3-O-(beta-D-glucopyranosyl)-isomotiol and 2-deacetoxy-fuscoatroside by fsoD and fsoF could not be ruled out, this process is likely to occur with difficulty due to bulky steric hindrance caused by the presence of a glycan at C3 in these compounds. Interestingly, fsoE can also utilize the aglycones isomotiol and 2-alpha-hydroxy-isomotiol as substrates to generate 19-beta-hydroxy-isomotiol and 2-alpha,19-beta-dihydroxy-isomotiol, respectively. These reactions occur with lower efficiency. Finally, fsoE can further convert 2-alpha,19-beta-dihydroxy-isomotiol into 2-alpha-hydroxy-ismotiol-19-one and 2-alpha-hydroxy-ismotiol-19-one into 2-deacetyl-3-deglucopyranosyl-fuscoatroside. This is Cytochrome P450 monooxygenase fsoE from Humicola fuscoatra.